The chain runs to 564 residues: MAENQVDPKRNLPLYGAADESTSATDKEDEVENVRQNGSAPPIEEARESNEAPAADEYPHGLSLFFIVLAIMLATFIISLDQTIVGTAIPKITDQFHGLDKVSWYGSAYFMTFGGFQTSMGKAYRYFSLKTTFLVSLFIFEIGSLICGVAPNANALIAGRAIAGLGGAGMATGGFTIIAFSSEPKRRPLFTGLVGSAYGLSAVAGPLIGGAFSDKVSWRWCFYINLPVGGLAAVIILIFFHSPSGAKPVKAPLKEKILNMDLVGVSLLMCLIICFILALQYGGQTESWNSSKVIGLLVGFVAILVALIIWEYYLGERAMLVGRLLKKRALWAPSTYMFFFAGSYFILLYYLPTYFQSIDDTSPIGSGVRNLPMVVTFSIAAILAGAFVERTGIATPVMLVGAAIATIGTGLIYTWDIGTPAGKWIGYQILAAFGFVIPWLIPMNIAQANADAQDMSTVTAYIFLAQTLGGAFSVSAAQSAFVNTMLTKIKTTAPDVDPMALIATGATQIRATFPNDIHGVLLAYMAGLKATFAISVGMVGFACLMGLFTPWNRLHGSAGGAAFA.

Residues 1 to 10 are compositionally biased toward basic and acidic residues; sequence MAENQVDPKR. Residues 1–52 are disordered; the sequence is MAENQVDPKRNLPLYGAADESTSATDKEDEVENVRQNGSAPPIEEARESNEA. Asn-37 carries N-linked (GlcNAc...) asparagine glycosylation. 7 helical membrane-spanning segments follow: residues 60 to 80, 101 to 118, 131 to 151, 161 to 181, 192 to 212, 220 to 240, and 262 to 282; these read HGLSLFFIVLAIMLATFIISL, KVSWYGSAYFMTFGGFQT, TTFLVSLFIFEIGSLICGVAP, AIAGLGGAGMATGGFTIIAFS, GLVGSAYGLSAVAGPLIGGAF, WCFYINLPVGGLAAVIILIFF, and LVGVSLLMCLIICFILALQYG. N-linked (GlcNAc...) asparagine glycosylation is present at Asn-289. Helical transmembrane passes span 293–313, 329–349, 368–388, 392–412, 425–445, 462–482, and 531–551; these read VIGLLVGFVAILVALIIWEYY, ALWAPSTYMFFFAGSYFILLY, VRNLPMVVTFSIAAILAGAFV, GIATPVMLVGAAIATIGTGLI, IGYQILAAFGFVIPWLIPMNI, IFLAQTLGGAFSVSAAQSAFV, and TFAISVGMVGFACLMGLFTPW.

The protein belongs to the major facilitator superfamily.

The protein localises to the membrane. In terms of biological role, MFS-type transporter; part of the gene cluster that mediates the biosynthesis of gregatin A, a fungal polyketide featuring an alkylated furanone core. This is MFS-type transporter grgE from Penicillium sp.